Reading from the N-terminus, the 131-residue chain is Large ribosomal subunit protein bL12 (131 aa).

A compositionally biased stretch (basic and acidic residues) spans 100–125 (STPKPIKEGISKEDAEAAKKQLEDAG). A disordered region spans residues 100-131 (STPKPIKEGISKEDAEAAKKQLEDAGGKVSIK).

It belongs to the bacterial ribosomal protein bL12 family. In terms of assembly, homodimer. Part of the ribosomal stalk of the 50S ribosomal subunit. Forms a multimeric L10(L12)X complex, where L10 forms an elongated spine to which 2 to 4 L12 dimers bind in a sequential fashion. Binds GTP-bound translation factors.

In terms of biological role, forms part of the ribosomal stalk which helps the ribosome interact with GTP-bound translation factors. Is thus essential for accurate translation. This chain is Large ribosomal subunit protein bL12, found in Cyanothece sp. (strain PCC 7425 / ATCC 29141).